A 350-amino-acid chain; its full sequence is Histidinol-phosphate aminotransferase 2 (350 aa).

Lys210 is subject to N6-(pyridoxal phosphate)lysine.

Belongs to the class-II pyridoxal-phosphate-dependent aminotransferase family. Histidinol-phosphate aminotransferase subfamily. As to quaternary structure, homodimer. It depends on pyridoxal 5'-phosphate as a cofactor.

The catalysed reaction is L-histidinol phosphate + 2-oxoglutarate = 3-(imidazol-4-yl)-2-oxopropyl phosphate + L-glutamate. Its pathway is amino-acid biosynthesis; L-histidine biosynthesis; L-histidine from 5-phospho-alpha-D-ribose 1-diphosphate: step 7/9. The sequence is that of Histidinol-phosphate aminotransferase 2 from Mannheimia succiniciproducens (strain KCTC 0769BP / MBEL55E).